The sequence spans 328 residues: Biotin synthase (328 aa).

Residues 49–273 (FNKEKIETCS…ICISRIIMPE (225 aa)) enclose the Radical SAM core domain. [4Fe-4S] cluster is bound by residues C67, C71, and C74. Positions 110, 142, 201, and 277 each coordinate [2Fe-2S] cluster.

This sequence belongs to the radical SAM superfamily. Biotin synthase family. As to quaternary structure, homodimer. [4Fe-4S] cluster serves as cofactor. It depends on [2Fe-2S] cluster as a cofactor.

The catalysed reaction is (4R,5S)-dethiobiotin + (sulfur carrier)-SH + 2 reduced [2Fe-2S]-[ferredoxin] + 2 S-adenosyl-L-methionine = (sulfur carrier)-H + biotin + 2 5'-deoxyadenosine + 2 L-methionine + 2 oxidized [2Fe-2S]-[ferredoxin]. It participates in cofactor biosynthesis; biotin biosynthesis; biotin from 7,8-diaminononanoate: step 2/2. Functionally, catalyzes the conversion of dethiobiotin (DTB) to biotin by the insertion of a sulfur atom into dethiobiotin via a radical-based mechanism. The chain is Biotin synthase from Methanococcus vannielii (strain ATCC 35089 / DSM 1224 / JCM 13029 / OCM 148 / SB).